A 105-amino-acid chain; its full sequence is MNKIRKGDEVVVLAGKDRGRRGVVLSRVDDERLLVEGVNRVKKHVRPNPLKGEVGGIVEKEMPLHISNVALFNPAAQKGDRVGIRVLEDGRKVRFFKSNGELVDA.

It belongs to the universal ribosomal protein uL24 family. Part of the 50S ribosomal subunit.

Its function is as follows. One of two assembly initiator proteins, it binds directly to the 5'-end of the 23S rRNA, where it nucleates assembly of the 50S subunit. One of the proteins that surrounds the polypeptide exit tunnel on the outside of the subunit. This chain is Large ribosomal subunit protein uL24, found in Aromatoleum aromaticum (strain DSM 19018 / LMG 30748 / EbN1) (Azoarcus sp. (strain EbN1)).